The chain runs to 244 residues: Nuclear protein UL4 homolog (244 aa).

The interval 193-227 is disordered; it reads RPDDQTTPTPTPHQYTSQRRQPETNCPSSPQPAFF. Polar residues predominate over residues 205 to 220; sequence HQYTSQRRQPETNCPS.

This sequence belongs to the alphaherpesvirinae HHV-1 UL4 family.

It localises to the host nucleus. This chain is Nuclear protein UL4 homolog, found in Varicella-zoster virus (strain Dumas) (HHV-3).